The primary structure comprises 394 residues: Cysteine protease ATG4B (394 aa).

Catalysis depends on Cys-74, which acts as the Nucleophile. Catalysis depends on residues Asp-280 and His-282. The short motif at 389–392 is the LIR element; sequence FEIL.

It belongs to the peptidase C54 family.

Its subcellular location is the cytoplasm. The protein localises to the cytosol. The protein resides in the cytoplasmic vesicle. It is found in the autophagosome. It localises to the endoplasmic reticulum. Its subcellular location is the mitochondrion. It carries out the reaction [protein]-C-terminal L-amino acid-glycyl-phosphatidylethanolamide + H2O = [protein]-C-terminal L-amino acid-glycine + a 1,2-diacyl-sn-glycero-3-phosphoethanolamine. The catalysed reaction is [protein]-C-terminal L-amino acid-glycyl-phosphatidylserine + H2O = [protein]-C-terminal L-amino acid-glycine + a 1,2-diacyl-sn-glycero-3-phospho-L-serine. In terms of biological role, cysteine protease that plays a key role in autophagy by mediating both proteolytic activation and delipidation of ATG8 family proteins. Required for canonical autophagy (macroautophagy), non-canonical autophagy as well as for mitophagy. The protease activity is required for proteolytic activation of ATG8 family proteins: cleaves the C-terminal amino acid of ATG8 proteins to reveal a C-terminal glycine. Exposure of the glycine at the C-terminus is essential for ATG8 proteins conjugation to phosphatidylethanolamine (PE) and insertion to membranes, which is necessary for autophagy. Protease activity is also required to counteract formation of high-molecular weight conjugates of ATG8 proteins (ATG8ylation): acts as a deubiquitinating-like enzyme that removes ATG8 conjugated to other proteins, such as ATG3. In addition to the protease activity, also mediates delipidation of ATG8 family proteins. Catalyzes delipidation of PE-conjugated forms of ATG8 proteins during macroautophagy. Also involved in non-canonical autophagy, a parallel pathway involving conjugation of ATG8 proteins to single membranes at endolysosomal compartments, by catalyzing delipidation of ATG8 proteins conjugated to phosphatidylserine (PS). The sequence is that of Cysteine protease ATG4B from Danio rerio (Zebrafish).